The chain runs to 395 residues: S-adenosylmethionine synthase (395 aa).

Residue His-12 participates in ATP binding. Mg(2+) is bound at residue Asp-14. Glu-40 contacts K(+). Residues Glu-53 and Gln-96 each contribute to the L-methionine site. The interval 96–106 (QSKEIADAVNF) is flexible loop. ATP-binding positions include 174–176 (DGK), 242–243 (RF), Asp-251, 257–258 (RK), Ala-274, and Lys-278. Asp-251 lines the L-methionine pocket. L-methionine is bound at residue Lys-282.

Belongs to the AdoMet synthase family. In terms of assembly, homotetramer; dimer of dimers. Mg(2+) serves as cofactor. K(+) is required as a cofactor.

It is found in the cytoplasm. The catalysed reaction is L-methionine + ATP + H2O = S-adenosyl-L-methionine + phosphate + diphosphate. It functions in the pathway amino-acid biosynthesis; S-adenosyl-L-methionine biosynthesis; S-adenosyl-L-methionine from L-methionine: step 1/1. Catalyzes the formation of S-adenosylmethionine (AdoMet) from methionine and ATP. The overall synthetic reaction is composed of two sequential steps, AdoMet formation and the subsequent tripolyphosphate hydrolysis which occurs prior to release of AdoMet from the enzyme. This is S-adenosylmethionine synthase from Tropheryma whipplei (strain TW08/27) (Whipple's bacillus).